A 103-amino-acid chain; its full sequence is NADH-quinone oxidoreductase subunit K (103 aa).

3 helical membrane passes run 5–25 (VPTS…LIGV), 32–52 (ILIF…LVAF), and 66–86 (FIVM…IVAI).

Belongs to the complex I subunit 4L family. In terms of assembly, NDH-1 is composed of 15 different subunits. Subunits NuoA, H, J, K, L, M, N constitute the membrane sector of the complex.

It is found in the cell membrane. It catalyses the reaction a quinone + NADH + 5 H(+)(in) = a quinol + NAD(+) + 4 H(+)(out). Its function is as follows. NDH-1 shuttles electrons from NADH, via FMN and iron-sulfur (Fe-S) centers, to quinones in the respiratory chain. The immediate electron acceptor for the enzyme in this species is believed to be a menaquinone. Couples the redox reaction to proton translocation (for every two electrons transferred, four hydrogen ions are translocated across the cytoplasmic membrane), and thus conserves the redox energy in a proton gradient. The polypeptide is NADH-quinone oxidoreductase subunit K (Deinococcus radiodurans (strain ATCC 13939 / DSM 20539 / JCM 16871 / CCUG 27074 / LMG 4051 / NBRC 15346 / NCIMB 9279 / VKM B-1422 / R1)).